Reading from the N-terminus, the 231-residue chain is MTRASLDKQPHEVASMFDDVAERYDLTNDLLSLGQDRVWRREVAKAVDARPAQKILDLAAGTATSSLPFARAGAYVVPCDFSLGMLRVGKKNHPWLPLTAGDATKLPFKDDTFDAVTISFGLRNVQDTDTALSELYRVTKPGGRVVICEFSHPTWAPFRTVYTEYLMRALPPVARAVSSNPDAYVYLAESIRAWPTQPELAERLRKAGWSKVAWRNLTGGVVALHRGFKAV.

S-adenosyl-L-methionine contacts are provided by residues T62, D80, 102-103 (DA), and S119.

The protein belongs to the class I-like SAM-binding methyltransferase superfamily. MenG/UbiE family.

It catalyses the reaction a 2-demethylmenaquinol + S-adenosyl-L-methionine = a menaquinol + S-adenosyl-L-homocysteine + H(+). It functions in the pathway quinol/quinone metabolism; menaquinone biosynthesis; menaquinol from 1,4-dihydroxy-2-naphthoate: step 2/2. Its function is as follows. Methyltransferase required for the conversion of demethylmenaquinol (DMKH2) to menaquinol (MKH2). This chain is Demethylmenaquinone methyltransferase, found in Streptomyces avermitilis (strain ATCC 31267 / DSM 46492 / JCM 5070 / NBRC 14893 / NCIMB 12804 / NRRL 8165 / MA-4680).